Reading from the N-terminus, the 588-residue chain is Adenine deaminase (588 aa).

Belongs to the metallo-dependent hydrolases superfamily. Adenine deaminase family. In terms of assembly, homodimer. It depends on Mn(2+) as a cofactor.

It catalyses the reaction adenine + H2O + H(+) = hypoxanthine + NH4(+). The sequence is that of Adenine deaminase from Escherichia coli O45:K1 (strain S88 / ExPEC).